We begin with the raw amino-acid sequence, 166 residues long: Dihydrofolate reductase (166 aa).

Positions 6–164 (KISLIVAMDK…YDYYFHIYER (159 aa)) constitute a DHFR domain. 10 to 12 (IVA) lines the substrate pocket. Residues 11 to 12 (VA) and 19 to 24 (IGKDND) each bind NADP(+). Residue D32 participates in substrate binding. Residue 48–51 (GRKN) participates in NADP(+) binding. A substrate-binding site is contributed by R62. Residues 67 to 70 (LTRD) and 100 to 105 (FGGEQI) contribute to the NADP(+) site. Residue T119 participates in substrate binding.

It belongs to the dihydrofolate reductase family.

The enzyme catalyses (6S)-5,6,7,8-tetrahydrofolate + NADP(+) = 7,8-dihydrofolate + NADPH + H(+). It participates in cofactor biosynthesis; tetrahydrofolate biosynthesis; 5,6,7,8-tetrahydrofolate from 7,8-dihydrofolate: step 1/1. In terms of biological role, key enzyme in folate metabolism. Catalyzes an essential reaction for de novo glycine and purine synthesis, and for DNA precursor synthesis. The chain is Dihydrofolate reductase (dfrD) from Staphylococcus haemolyticus.